Consider the following 120-residue polypeptide: Small ribosomal subunit protein eS24 (120 aa).

The segment at 101 to 120 is disordered; it reads RDAGTKQKKGGSKGGQGAKG.

The protein belongs to the eukaryotic ribosomal protein eS24 family.

The protein is Small ribosomal subunit protein eS24 of Saccharolobus islandicus (strain Y.N.15.51 / Yellowstone #2) (Sulfolobus islandicus).